A 311-amino-acid chain; its full sequence is tRNA pseudouridine synthase B (311 aa).

The active-site Nucleophile is Asp-52.

This sequence belongs to the pseudouridine synthase TruB family. Type 1 subfamily.

It carries out the reaction uridine(55) in tRNA = pseudouridine(55) in tRNA. Its function is as follows. Responsible for synthesis of pseudouridine from uracil-55 in the psi GC loop of transfer RNAs. This Burkholderia mallei (strain ATCC 23344) protein is tRNA pseudouridine synthase B.